Reading from the N-terminus, the 248-residue chain is tRNA (guanine-N(1)-)-methyltransferase (248 aa).

S-adenosyl-L-methionine contacts are provided by residues glycine 113 and 133–138 (IGDYVL).

This sequence belongs to the RNA methyltransferase TrmD family. In terms of assembly, homodimer.

The protein resides in the cytoplasm. The enzyme catalyses guanosine(37) in tRNA + S-adenosyl-L-methionine = N(1)-methylguanosine(37) in tRNA + S-adenosyl-L-homocysteine + H(+). In terms of biological role, specifically methylates guanosine-37 in various tRNAs. The protein is tRNA (guanine-N(1)-)-methyltransferase of Shewanella halifaxensis (strain HAW-EB4).